We begin with the raw amino-acid sequence, 246 residues long: 1-(5-phosphoribosyl)-5-[(5-phosphoribosylamino)methylideneamino] imidazole-4-carboxamide isomerase (246 aa).

Asp8 acts as the Proton acceptor in catalysis. Catalysis depends on Asp131, which acts as the Proton donor.

The protein belongs to the HisA/HisF family.

The protein resides in the cytoplasm. The catalysed reaction is 1-(5-phospho-beta-D-ribosyl)-5-[(5-phospho-beta-D-ribosylamino)methylideneamino]imidazole-4-carboxamide = 5-[(5-phospho-1-deoxy-D-ribulos-1-ylimino)methylamino]-1-(5-phospho-beta-D-ribosyl)imidazole-4-carboxamide. The protein operates within amino-acid biosynthesis; L-histidine biosynthesis; L-histidine from 5-phospho-alpha-D-ribose 1-diphosphate: step 4/9. This is 1-(5-phosphoribosyl)-5-[(5-phosphoribosylamino)methylideneamino] imidazole-4-carboxamide isomerase from Chromobacterium violaceum (strain ATCC 12472 / DSM 30191 / JCM 1249 / CCUG 213 / NBRC 12614 / NCIMB 9131 / NCTC 9757 / MK).